The following is an 89-amino-acid chain: MSITAERKQALVAEYANKAGDTGSPEVQIAVLSERISNLTNHFKFHKKDNHSRRGLLKMVSQRRRLLDYLKEIDQNRYHTLIKKLGLRR.

Belongs to the universal ribosomal protein uS15 family. Part of the 30S ribosomal subunit. Forms a bridge to the 50S subunit in the 70S ribosome, contacting the 23S rRNA.

In terms of biological role, one of the primary rRNA binding proteins, it binds directly to 16S rRNA where it helps nucleate assembly of the platform of the 30S subunit by binding and bridging several RNA helices of the 16S rRNA. Its function is as follows. Forms an intersubunit bridge (bridge B4) with the 23S rRNA of the 50S subunit in the ribosome. This chain is Small ribosomal subunit protein uS15, found in Bartonella quintana (strain Toulouse) (Rochalimaea quintana).